The following is a 315-amino-acid chain: 4-hydroxy-3-methylbut-2-enyl diphosphate reductase (315 aa).

Residue cysteine 12 coordinates [4Fe-4S] cluster. (2E)-4-hydroxy-3-methylbut-2-enyl diphosphate-binding residues include histidine 41 and histidine 74. Positions 41 and 74 each coordinate dimethylallyl diphosphate. Residues histidine 41 and histidine 74 each contribute to the isopentenyl diphosphate site. Cysteine 96 is a binding site for [4Fe-4S] cluster. (2E)-4-hydroxy-3-methylbut-2-enyl diphosphate is bound at residue histidine 124. Histidine 124 is a dimethylallyl diphosphate binding site. Histidine 124 is an isopentenyl diphosphate binding site. Glutamate 126 functions as the Proton donor in the catalytic mechanism. Threonine 168 provides a ligand contact to (2E)-4-hydroxy-3-methylbut-2-enyl diphosphate. [4Fe-4S] cluster is bound at residue cysteine 198. (2E)-4-hydroxy-3-methylbut-2-enyl diphosphate-binding residues include serine 226, serine 227, asparagine 228, and serine 270. Residues serine 226, serine 227, asparagine 228, and serine 270 each contribute to the dimethylallyl diphosphate site. The isopentenyl diphosphate site is built by serine 226, serine 227, asparagine 228, and serine 270.

This sequence belongs to the IspH family. [4Fe-4S] cluster serves as cofactor.

It carries out the reaction isopentenyl diphosphate + 2 oxidized [2Fe-2S]-[ferredoxin] + H2O = (2E)-4-hydroxy-3-methylbut-2-enyl diphosphate + 2 reduced [2Fe-2S]-[ferredoxin] + 2 H(+). It catalyses the reaction dimethylallyl diphosphate + 2 oxidized [2Fe-2S]-[ferredoxin] + H2O = (2E)-4-hydroxy-3-methylbut-2-enyl diphosphate + 2 reduced [2Fe-2S]-[ferredoxin] + 2 H(+). Its pathway is isoprenoid biosynthesis; dimethylallyl diphosphate biosynthesis; dimethylallyl diphosphate from (2E)-4-hydroxy-3-methylbutenyl diphosphate: step 1/1. It functions in the pathway isoprenoid biosynthesis; isopentenyl diphosphate biosynthesis via DXP pathway; isopentenyl diphosphate from 1-deoxy-D-xylulose 5-phosphate: step 6/6. Functionally, catalyzes the conversion of 1-hydroxy-2-methyl-2-(E)-butenyl 4-diphosphate (HMBPP) into a mixture of isopentenyl diphosphate (IPP) and dimethylallyl diphosphate (DMAPP). Acts in the terminal step of the DOXP/MEP pathway for isoprenoid precursor biosynthesis. The chain is 4-hydroxy-3-methylbut-2-enyl diphosphate reductase from Pseudomonas fluorescens (strain ATCC BAA-477 / NRRL B-23932 / Pf-5).